The chain runs to 160 residues: Lymphocyte antigen 86 (160 aa).

The signal sequence occupies residues 1–20 (MKTLNVLALVLVLLCINAST). 3 disulfide bridges follow: cysteine 28/cysteine 53, cysteine 40/cysteine 149, and cysteine 97/cysteine 107.

In terms of assembly, M-shaped tetramer of two CD180-LY86 heterodimers. As to expression, detected in the macrophage-like 10.4 cells.

Its subcellular location is the secreted. The protein resides in the extracellular space. In terms of biological role, may cooperate with CD180 and TLR4 to mediate the innate immune response to bacterial lipopolysaccharide (LPS) and cytokine production. Important for efficient CD180 cell surface expression. This chain is Lymphocyte antigen 86 (LY86), found in Gallus gallus (Chicken).